The following is a 394-amino-acid chain: NAC domain-containing protein 26 (394 aa).

One can recognise an NAC domain in the interval Val7–Lys156. Residues Ile107 to Val162 mediate DNA binding.

This sequence belongs to the plant vascular related NAC-domain protein family. As to quaternary structure, interacts with NAC083/VNI2. As to expression, detected in root vessels of protoxylems, outermost metaxylems, inner metaxylems, shoots and hypocotyls. Expressed in roots, hypocotyls, cotyledons and leaves. Expressed in developing xylems. Specifically expressed in vessels in the secondary xylem of the root-hypocotyl region, and in vessels but not in interfascicular fibers in stems.

The protein localises to the nucleus. Transcription activator that binds to the secondary wall NAC binding element (SNBE), 5'-(T/A)NN(C/T)(T/C/G)TNNNNNNNA(A/C)GN(A/C/T)(A/T)-3', in the promoter of target genes. Involved in xylem formation by promoting the expression of secondary wall-associated transcription factors and of genes involved in secondary wall biosynthesis and programmed cell death, genes driven by the secondary wall NAC binding element (SNBE). Triggers thickening of secondary walls. In Arabidopsis thaliana (Mouse-ear cress), this protein is NAC domain-containing protein 26.